Here is a 501-residue protein sequence, read N- to C-terminus: Protein YLS7 (501 aa).

Residues 25–45 traverse the membrane as a helical; Signal-anchor for type II membrane protein segment; sequence IAFAIGGLTSFVIFASLLLFT. The interval 69–131 is disordered; it reads HSIHDPDRNP…NVSIDEEATQ (63 aa). Residues 78–89 are compositionally biased toward low complexity; the sequence is PSPVSSSESPPV. Residues 94–113 are compositionally biased toward basic and acidic residues; that stretch reads SDDKVLPKGSHDSNDVRLGE. Polar residues predominate over residues 114–124; the sequence is ETNSGKSSNVS. Residues 211–213 carry the GDS motif motif; it reads GDS. A disordered region spans residues 438–467; the sequence is RHDGHPGPYRSPDPKKITKRGPDGQPPPQD. Residues 449–459 are compositionally biased toward basic and acidic residues; sequence PDPKKITKRGP. The DCXHWCLPGXXDXWN motif motif lies at 467 to 481; sequence DCLHWCMPGPVDTWN.

It belongs to the PC-esterase family. TBL subfamily. In terms of tissue distribution, expressed in roots, cauline leaves and flowers.

The protein resides in the membrane. May act as a bridging protein that binds pectin and other cell wall polysaccharides. Probably involved in maintaining esterification of pectins. May be involved in the specific O-acetylation of cell wall polymers. The polypeptide is Protein YLS7 (YLS7) (Arabidopsis thaliana (Mouse-ear cress)).